The primary structure comprises 178 residues: Mediator of RNA polymerase II transcription subunit 21 (178 aa).

The interval 36–91 (DDDDVNSYSNMAANAPLPQSQQQRQQQKKQQEPQQEIEQPQQQSNPESKSISPPKE) is disordered. The span at 67–85 (EPQQEIEQPQQQSNPESKS) shows a compositional bias: low complexity. A coiled-coil region spans residues 128 to 169 (NEQMNLINELSDKLQAIEEERIQKIKEKDNLLNLLESMIKEV).

It belongs to the Mediator complex subunit 21 family. As to quaternary structure, component of the Mediator complex.

It localises to the nucleus. Its function is as follows. Component of the Mediator complex, a coactivator involved in the regulated transcription of nearly all RNA polymerase II-dependent genes. Mediator functions as a bridge to convey information from gene-specific regulatory proteins to the basal RNA polymerase II transcription machinery. Mediator is recruited to promoters by direct interactions with regulatory proteins and serves as a scaffold for the assembly of a functional preinitiation complex with RNA polymerase II and the general transcription factors. In Candida albicans (strain SC5314 / ATCC MYA-2876) (Yeast), this protein is Mediator of RNA polymerase II transcription subunit 21 (SRB7).